A 463-amino-acid chain; its full sequence is MTGPMAVRTDRTPLVVVGDALLDRDLTGTADRLAPDAPVPVVQECAERIRPGGAALAAYLAARDGREVTLIAGVGEDPAGLALRELLAPWLKLIPLPLTGTVPEKTRVLAQDRPVVRLDRGGGRVREATDEARDALGCARAVLVSDYGRGAADALRDVLAARPPLVWDPHPRGGPPVPGTRLVTPAEKEAHGFAPSEGRPGGGLRAAALNAAALVRDWRVAAVTVTLGSRGALLSYGEHPLLVPAPAAHHGDSCGAGDRFAATAAGLLADGALVGEAVEGAVGAATAFVAAGGAAAVPPAGSERALAALPDTDDPGALAARIRAEHGTVVAAGGCFDLLHAGHVGLLQAARRLGDCLVVCVNSDASVRRGKGGGRPVNPLADRVRVLRALACVDAVAVFDEDTPERLLGELRPDVWVKGGDYAGADLPEAGLLKEWGGQAVLLPYLDGRSSTALLARAAEGAR.

A ribokinase region spans residues 1–313 (MTGPMAVRTD…RALAALPDTD (313 aa)). The active site involves Asp-258. Residues 331-463 (AAGGCFDLLH…LLARAAEGAR (133 aa)) are cytidylyltransferase.

It in the N-terminal section; belongs to the carbohydrate kinase PfkB family. In the C-terminal section; belongs to the cytidylyltransferase family. In terms of assembly, homodimer.

The catalysed reaction is D-glycero-beta-D-manno-heptose 7-phosphate + ATP = D-glycero-beta-D-manno-heptose 1,7-bisphosphate + ADP + H(+). It carries out the reaction D-glycero-beta-D-manno-heptose 1-phosphate + ATP + H(+) = ADP-D-glycero-beta-D-manno-heptose + diphosphate. The protein operates within nucleotide-sugar biosynthesis; ADP-L-glycero-beta-D-manno-heptose biosynthesis; ADP-L-glycero-beta-D-manno-heptose from D-glycero-beta-D-manno-heptose 7-phosphate: step 1/4. It participates in nucleotide-sugar biosynthesis; ADP-L-glycero-beta-D-manno-heptose biosynthesis; ADP-L-glycero-beta-D-manno-heptose from D-glycero-beta-D-manno-heptose 7-phosphate: step 3/4. In terms of biological role, catalyzes the phosphorylation of D-glycero-D-manno-heptose 7-phosphate at the C-1 position to selectively form D-glycero-beta-D-manno-heptose-1,7-bisphosphate. Catalyzes the ADP transfer from ATP to D-glycero-beta-D-manno-heptose 1-phosphate, yielding ADP-D-glycero-beta-D-manno-heptose. This Streptomyces coelicolor (strain ATCC BAA-471 / A3(2) / M145) protein is Bifunctional protein HldE.